Here is a 94-residue protein sequence, read N- to C-terminus: Protein S100-A1 (94 aa).

2 EF-hand domains span residues 13–48 and 50–85; these read INVF…FLDA and KDVD…LTVA. Ca(2+) contacts are provided by lysine 28, glutamate 33, aspartate 63, asparagine 65, aspartate 67, glutamate 69, and glutamate 74. Cysteine 86 is subject to S-nitrosocysteine.

The protein belongs to the S-100 family. As to quaternary structure, dimer of either two alpha chains, or two beta chains, or one alpha and one beta chain. Also forms heterodimers with S100P. Interacts with AGER. Interacts with CAPZA1. Interacts with FKBP4. Interacts with RYR1 and RYR2. Interacts with CACYBP in a calcium-dependent manner. Interacts with PPP5C (via TPR repeats); the interaction is calcium-dependent and modulates PPP5C activity. Interacts with ATP2A2 and PLN in a Ca(2+)-dependent manner. Interacts with mitochondrial F1-ATPase subunits ATP5F1A and ATP5F1B; these interactions increase F1-ATPase activity. Post-translationally, glutathionylated; glutathionylation increases affinity to calcium about 10-fold. As to expression, highly prevalent in heart. Also found in lesser quantities in skeletal muscle and brain.

The protein resides in the cytoplasm. Its subcellular location is the sarcoplasmic reticulum. The protein localises to the mitochondrion. Small calcium binding protein that plays important roles in several biological processes such as Ca(2+) homeostasis, chondrocyte biology and cardiomyocyte regulation. In response to an increase in intracellular Ca(2+) levels, binds calcium which triggers conformational changes. These changes allow interactions with specific target proteins and modulate their activity. Regulates a network in cardiomyocytes controlling sarcoplasmic reticulum Ca(2+) cycling and mitochondrial function through interaction with the ryanodine receptors RYR1 and RYR2, sarcoplasmic reticulum Ca(2+)-ATPase/ATP2A2 and mitochondrial F1-ATPase. Facilitates diastolic Ca(2+) dissociation and myofilament mechanics in order to improve relaxation during diastole. This is Protein S100-A1 (S100A1) from Homo sapiens (Human).